Reading from the N-terminus, the 1426-residue chain is Homeobox protein cut-like 2 (1426 aa).

Residues 77–104 (PEPPSAREQNEGTCPTGHTPANGNHLPG) form a disordered region. Phosphoserine is present on serine 81. Positions 131–311 (ITLAARLGEA…IKTELSILRA (181 aa)) form a coiled coil. 6 disordered regions span residues 351–419 (ALLA…FPSL), 460–488 (KPPS…GPEE), 599–628 (EIES…STSE), 653–676 (ESGP…TASQ), 743–769 (YASV…PRGD), and 904–977 (LGQG…SSSQ). The segment covering 374-395 (PPYPPQLPPPPGPEDPLSPSPA) has biased composition (pro residues). Composition is skewed to low complexity over residues 397–408 (PLLGPSLGPDGP) and 460–470 (KPPSAPAASVP). A DNA-binding region (CUT 1) is located at residues 482–569 (DGAGPEEEQL…VLALRTIQVR (88 aa)). Positions 587–655 (DAIKSILEQA…QQALLEMESG (69 aa)) form a coiled coil. Residues 608-628 (SKNSPASVSIPNGTASSSTSE) show a composition bias toward polar residues. Composition is skewed to low complexity over residues 743-757 (YASV…SSYS), 910-928 (QAPT…EPTS), and 965-976 (SSSLGGKPFSSS). The CUT 2 DNA-binding region spans 828–915 (QYELYMYREV…QGQGQAPTQQ (88 aa)). A DNA-binding region (CUT 3) is located at residues 983–1070 (QEMVAMSPEL…VEKLRDMKKL (88 aa)). The segment at residues 1113-1172 (AKKPRVVLAPAEKEALRKAYQLEPYPSQQTIELLSFQLNLKTNTVINWFHNYRSRMRREM) is a DNA-binding region (homeobox). A disordered region spans residues 1177–1392 (TQDDPDFDPS…AALHPSTKVN (216 aa)). Composition is skewed to basic and acidic residues over residues 1233–1245 (APDR…KQEE) and 1260–1274 (DPDR…EHTH). Positions 1318 to 1332 (LSFKSTSESSCCSLE) are enriched in low complexity. The span at 1338 to 1350 (PSVISSPDLTTCV) shows a compositional bias: polar residues. Residues 1351–1364 (SPAPSSSAPISPSL) are compositionally biased toward low complexity.

The protein belongs to the CUT homeobox family. Restricted to neural tissues. Expressed exclusively in the central and peripheral nervous systems.

It localises to the nucleus. In terms of biological role, transcription factor involved in the control of neuronal proliferation and differentiation in the brain. Regulates dendrite development and branching, dendritic spine formation, and synaptogenesis in cortical layers II-III. Binds to DNA in a sequence-specific manner. The polypeptide is Homeobox protein cut-like 2 (Cux2) (Mus musculus (Mouse)).